A 331-amino-acid chain; its full sequence is Glycerol-3-phosphate dehydrogenase [NAD(P)+] (331 aa).

3 residues coordinate NADPH: tryptophan 11, arginine 30, and lysine 105. The sn-glycerol 3-phosphate site is built by lysine 105, glycine 134, and serine 136. Alanine 138 is an NADPH binding site. Sn-glycerol 3-phosphate contacts are provided by lysine 189, aspartate 242, serine 252, arginine 253, and asparagine 254. Lysine 189 (proton acceptor) is an active-site residue. Residue arginine 253 coordinates NADPH. The NADPH site is built by valine 277 and glutamate 279.

This sequence belongs to the NAD-dependent glycerol-3-phosphate dehydrogenase family.

It localises to the cytoplasm. The enzyme catalyses sn-glycerol 3-phosphate + NAD(+) = dihydroxyacetone phosphate + NADH + H(+). It catalyses the reaction sn-glycerol 3-phosphate + NADP(+) = dihydroxyacetone phosphate + NADPH + H(+). It functions in the pathway membrane lipid metabolism; glycerophospholipid metabolism. In terms of biological role, catalyzes the reduction of the glycolytic intermediate dihydroxyacetone phosphate (DHAP) to sn-glycerol 3-phosphate (G3P), the key precursor for phospholipid synthesis. The sequence is that of Glycerol-3-phosphate dehydrogenase [NAD(P)+] from Herminiimonas arsenicoxydans.